A 370-amino-acid chain; its full sequence is Cyanuric acid amidohydrolase (370 aa).

Positions 1 to 103 are RU A; the sequence is MQAQVFRVPM…TIFTVQKTDN (103 aa). Residues Arg51 and 82 to 83 each bind substrate; that span reads SG. The segment at 113 to 250 is RU B; that stretch reads RLAVQQIFTR…NEIIVMGNSR (138 aa). Lys163 is an active-site residue. Substrate-binding positions include Arg195 and 233 to 234; that span reads SA. Catalysis depends on Ser233, which acts as the Nucleophile. The interval 256–370 is RU C; it reads LVIGHAEMKD…GPVAVIARTA (115 aa). Glu303 contacts Mg(2+). Substrate-binding positions include Arg330 and 349–350; that span reads SG. Mg(2+) is bound by residues Ser352, Gln355, Gly356, Pro357, and Gly360.

This sequence belongs to the cyclic amide hydrolase (CyAH) family. As to quaternary structure, homotetramer.

The enzyme catalyses cyanurate + H2O = 1-carboxybiuret + H(+). It functions in the pathway xenobiotic degradation; atrazine degradation; biuret from cyanurate: step 1/1. With respect to regulation, inhibited by barbituric acid. Responsible for the hydrolysis of cyanuric acid, an intermediate formed during catabolism of s-triazine based compounds in herbicides such as atrazine and polymers such as melamine. Catalyzes the hydrolytic opening of the s-triazine ring of cyanuric acid (2,4,6-trihydroxy-s-triazine) to yield carbon dioxide and carboxybiuret, which spontaneously decarboxylates to biuret. This is Cyanuric acid amidohydrolase (trzD) from Pseudomonas sp.